We begin with the raw amino-acid sequence, 312 residues long: Pantothenate kinase (312 aa).

Residue 97–104 (GSVAVGKS) participates in ATP binding.

Belongs to the prokaryotic pantothenate kinase family.

Its subcellular location is the cytoplasm. It catalyses the reaction (R)-pantothenate + ATP = (R)-4'-phosphopantothenate + ADP + H(+). It participates in cofactor biosynthesis; coenzyme A biosynthesis; CoA from (R)-pantothenate: step 1/5. The protein is Pantothenate kinase of Mycobacterium bovis (strain BCG / Pasteur 1173P2).